The chain runs to 549 residues: Probable protein kinase UbiB (549 aa).

Residues D123–L501 enclose the Protein kinase domain. Residues L129–V137 and K152 each bind ATP. D287 serves as the catalytic Proton acceptor. 2 consecutive transmembrane segments (helical) span residues S498 to Q518 and A520 to W540.

This sequence belongs to the ABC1 family. UbiB subfamily.

It localises to the cell inner membrane. It participates in cofactor biosynthesis; ubiquinone biosynthesis [regulation]. In terms of biological role, is probably a protein kinase regulator of UbiI activity which is involved in aerobic coenzyme Q (ubiquinone) biosynthesis. In Shewanella sp. (strain MR-4), this protein is Probable protein kinase UbiB.